The chain runs to 878 residues: von Willebrand factor A domain-containing protein DDB_G0267758 (878 aa).

The 134-residue stretch at 36–169 folds into the VIT domain; sequence GLFLTENNKK…TVKITLTITS (134 aa). The 181-residue stretch at 316–496 folds into the VWFA domain; the sequence is EFIFLIDCSG…ISLKPMFSNI (181 aa). Over residues 595–623 the composition is skewed to low complexity; it reads SSSSSSSSSSSSSSSSSSSSSSSSSSSSS. 2 disordered regions span residues 595 to 638 and 752 to 774; these read SSSS…HRLS and SVKK…SKTK. A compositionally biased stretch (polar residues) spans 624–635; the sequence is TTTATTNQNQIH.

The chain is von Willebrand factor A domain-containing protein DDB_G0267758 from Dictyostelium discoideum (Social amoeba).